We begin with the raw amino-acid sequence, 201 residues long: uncharacterized protein (201 aa).

The chain crosses the membrane as a helical span at residues 11-31 (IIILTIMILTIIIFTRTINGL).

It is found in the membrane. This is an uncharacterized protein from Acanthamoeba polyphaga mimivirus (APMV).